A 368-amino-acid polypeptide reads, in one-letter code: Spermidine/putrescine import ATP-binding protein PotA (368 aa).

In terms of domain architecture, ABC transporter spans 6-236; that stretch reads VSIKNVSKFF…PVNVFAATFI (231 aa). ATP is bound at residue 38 to 45; that stretch reads GPSGCGKT.

The protein belongs to the ABC transporter superfamily. Spermidine/putrescine importer (TC 3.A.1.11.1) family. As to quaternary structure, the complex is composed of two ATP-binding proteins (PotA), two transmembrane proteins (PotB and PotC) and a solute-binding protein (PotD).

The protein localises to the cell inner membrane. It catalyses the reaction ATP + H2O + polyamine-[polyamine-binding protein]Side 1 = ADP + phosphate + polyamineSide 2 + [polyamine-binding protein]Side 1.. In terms of biological role, part of the ABC transporter complex PotABCD involved in spermidine/putrescine import. Responsible for energy coupling to the transport system. This chain is Spermidine/putrescine import ATP-binding protein PotA, found in Thermotoga maritima (strain ATCC 43589 / DSM 3109 / JCM 10099 / NBRC 100826 / MSB8).